We begin with the raw amino-acid sequence, 377 residues long: Copper-containing nitrite reductase (377 aa).

Residues 1–35 (MTNTLQMTRRTMLTGAAVAGALTPILTSGGGNASP) constitute a signal peptide (tat-type signal). Plastocyanin-like domains are found at residues 99–194 (MTFD…IMVL) and 259–360 (GAVG…FKVT). Cu cation is bound by residues His-132, His-137, His-172, Cys-173, His-182, Met-187, and His-343.

This sequence belongs to the multicopper oxidase family. In terms of assembly, homotrimer. The cofactor is Cu(2+). Cu(+) is required as a cofactor. FAD serves as cofactor. In terms of processing, predicted to be exported by the Tat system. The position of the signal peptide cleavage has not been experimentally proven.

Its subcellular location is the periplasm. The enzyme catalyses nitric oxide + Fe(III)-[cytochrome c] + H2O = Fe(II)-[cytochrome c] + nitrite + 2 H(+). Its pathway is nitrogen metabolism; nitrate reduction (denitrification); dinitrogen from nitrate: step 2/4. In Rhizobium sullae (Rhizobium hedysari), this protein is Copper-containing nitrite reductase (nirK).